The primary structure comprises 193 residues: Xanthine phosphoribosyltransferase (193 aa).

Positions 20 and 27 each coordinate xanthine. Position 128–132 (128–132) interacts with 5-phospho-alpha-D-ribose 1-diphosphate; sequence ANGQA. Residue Lys156 coordinates xanthine.

Belongs to the purine/pyrimidine phosphoribosyltransferase family. Xpt subfamily. As to quaternary structure, homodimer.

It localises to the cytoplasm. The catalysed reaction is XMP + diphosphate = xanthine + 5-phospho-alpha-D-ribose 1-diphosphate. The protein operates within purine metabolism; XMP biosynthesis via salvage pathway; XMP from xanthine: step 1/1. Functionally, converts the preformed base xanthine, a product of nucleic acid breakdown, to xanthosine 5'-monophosphate (XMP), so it can be reused for RNA or DNA synthesis. The chain is Xanthine phosphoribosyltransferase from Streptococcus pyogenes serotype M5 (strain Manfredo).